The primary structure comprises 517 residues: T-box transcription factor TBX22 (517 aa).

The interval 1–83 (MALSSRAHAF…SDESNSQESL (83 aa)) is disordered. Positions 35–45 (LQEEQFVEEGE) are enriched in acidic residues. The span at 46 to 66 (EILRSPSRDSQQPEKRLKAES) shows a compositional bias: basic and acidic residues. Low complexity predominate over residues 74–83 (SDESNSQESL). The T-box DNA-binding region spans 93–280 (LQGSDLWKRF…RNPFAKGFRD (188 aa)). Positions 312–333 (TQSGSSGSSPVTSSGGAPSPLN) are disordered. The span at 314 to 333 (SGSSGSSPVTSSGGAPSPLN) shows a compositional bias: low complexity.

The protein resides in the nucleus. Functionally, probable transcriptional regulator involved in developmental processes. This is major determinant crucial to palatogenesis. The polypeptide is T-box transcription factor TBX22 (Tbx22) (Mus musculus (Mouse)).